The primary structure comprises 363 residues: Nicotinamide adenine dinucleotide transporter 2, mitochondrial (363 aa).

Solcar repeat units lie at residues 15-107 (REVA…LKDV), 115-203 (LSIG…IKQY), and 215-305 (LSPG…MLRF). The next 6 membrane-spanning stretches (helical) occupy residues 21 to 41 (AGAGATAGAIAATFVCPLDVI), 82 to 102 (GLSPTIIALLPNWAVYFSVYG), 121 to 141 (MIAAAGAGAATSIATNPLWVV), 176 to 196 (LYSGILPSLAGVSHVAIQFPA), 215 to 235 (LSPGNVAIASSIAKVIASILT), and 277 to 299 (LYRGCATNLLRTTPSAVITFTTY). Residues 313 to 363 (ETNRSDDRRREEERKNLVSRRGEEEDKDLGLRESQTQSNKISTPHIPLGSK) are disordered. Residues 315–343 (NRSDDRRREEERKNLVSRRGEEEDKDLGL) are compositionally biased toward basic and acidic residues. The segment covering 345–354 (ESQTQSNKIS) has biased composition (polar residues).

This sequence belongs to the mitochondrial carrier (TC 2.A.29) family. In terms of tissue distribution, highly expressed in young meristematic shoot area, vascular bundles of leaves, developing siliques including the funiculi, petal veins, developing pollen and central cylinder of roots.

The protein localises to the mitochondrion membrane. Its activity is regulated as follows. Inhibited by pyridoxal 5'-phosphate, bathophenanthroline, tannic acid, mersalyl, mercuric chloride, p-hydroxymercuribenzoate, p-hydroxymercuribenzoate sulfonate, bromocresol purple and N-ethylmaleimide. Mediates the NAD(+) import into chloroplast. Favors the NAD(+)(in)/ADP or AMP(out) antiport exchange, but is also able to catalyze a low unidirectional transport (uniport) of NAD(+). Transports NAD(+), nicotinic acid adenine dinucleotide, nicotinamide mononucleotide, nicotinic acid mononucleotide, FAD, FMN, TTP, TDP, TMP, UTP, UDP, UMP, CTP, CDP, CMP, GTP, GDP, GMP, 3'-AMP, ATP, ADP and AMP, has low transport activity with cAMP, NADH and alpha-NAD(+), and has no activity with NADP(+), NADPH, nicotinamide, nicotinic acid, adenosine, thiamine mono- or diphosphate, inorganic phosphate, CoA, folate, NaCl, malate, malonate, citrate, fumarate, aspartate, glutamate, S-adenosylmethionine, lysine, arginine, and ornithine. This chain is Nicotinamide adenine dinucleotide transporter 2, mitochondrial (NDT2), found in Arabidopsis thaliana (Mouse-ear cress).